A 306-amino-acid polypeptide reads, in one-letter code: GTPase IMAP family member 1 (306 aa).

A disordered region spans residues 1 to 21 (MGGRKMATDEENVYGLEENAQ). The Cytoplasmic segment spans residues 1–272 (MGGRKMATDE…RLWKWLKSPR (272 aa)). One can recognise an AIG1-type G domain in the interval 25-229 (ESTRRLILVG…YSNEVYELAQ (205 aa)). The segment at 34 to 41 (GRTGAGKS) is G1. GTP is bound by residues 34–42 (GRTGAGKSA) and S55. A G2 region spans residues 61–65 (SVTRA). The G3 stretch occupies residues 82 to 85 (DTPD). A G4 region spans residues 152-155 (TRKE). GTP-binding positions include 153–155 (RKE) and N190. Positions 189-191 (DNR) are G5. A helical; Anchor for type IV membrane protein membrane pass occupies residues 273-292 (SWRLGLALLLGGALLFWVLL). At 293-306 (HRRWSEAVAEVGPD) the chain is on the lumenal side.

It belongs to the TRAFAC class TrmE-Era-EngA-EngB-Septin-like GTPase superfamily. AIG1/Toc34/Toc159-like paraseptin GTPase family. IAN subfamily. In terms of tissue distribution, predominantly expressed in the spleen and to a lesser extent in the lymph nodes. Detected in T-cells.

The protein resides in the endoplasmic reticulum membrane. It localises to the golgi apparatus membrane. In terms of biological role, may regulate lymphocyte survival. Required for normal levels of mature T-lymphocytes and mature B-cells. The sequence is that of GTPase IMAP family member 1 (GIMAP1) from Homo sapiens (Human).